The following is a 231-amino-acid chain: MTELNGRVAIITGASSGIGAATAKALEKQGVKVVLAGRSHDKLNTLAKDMNEDNIHIVPTDVTNQVEVDALVAKVIDVFGHVDIFVNCAGVMRSSKITDYQVESWDSMVDTNIKGLLYSLNAILPKFEAQGSGHVVNLASISANEVSKESALYSATKSAVLMIFNGLEKELAKTGIKTTSILPGMVDTPMTERSDFGGRKKLDPENIADAIIYALTQPAHVNVNEVTVRPV.

10 to 34 (IITGASSGIGAATAKALEKQGVKVV) contributes to the NADP(+) binding site. Ser140 provides a ligand contact to substrate. The active-site Proton acceptor is the Tyr153.

The protein belongs to the short-chain dehydrogenases/reductases (SDR) family.

This is an uncharacterized protein from Staphylococcus haemolyticus (strain JCSC1435).